Consider the following 242-residue polypeptide: UPF0309 protein BSUIS_B0903 (242 aa).

Positions 30–214 (AADLIAAAAR…ARLVGEGDAP (185 aa)) constitute an SIS domain.

This sequence belongs to the UPF0309 family.

The protein is UPF0309 protein BSUIS_B0903 of Brucella suis (strain ATCC 23445 / NCTC 10510).